The chain runs to 131 residues: Small ribosomal subunit protein uS11 (131 aa).

The protein belongs to the universal ribosomal protein uS11 family. Part of the 30S ribosomal subunit. Interacts with proteins S7 and S18. Binds to IF-3.

Its function is as follows. Located on the platform of the 30S subunit, it bridges several disparate RNA helices of the 16S rRNA. Forms part of the Shine-Dalgarno cleft in the 70S ribosome. This Exiguobacterium sibiricum (strain DSM 17290 / CCUG 55495 / CIP 109462 / JCM 13490 / 255-15) protein is Small ribosomal subunit protein uS11.